A 151-amino-acid polypeptide reads, in one-letter code: Large ribosomal subunit protein bL9 (151 aa).

This sequence belongs to the bacterial ribosomal protein bL9 family.

In terms of biological role, binds to the 23S rRNA. The sequence is that of Large ribosomal subunit protein bL9 from Bordetella bronchiseptica (strain ATCC BAA-588 / NCTC 13252 / RB50) (Alcaligenes bronchisepticus).